Here is a 565-residue protein sequence, read N- to C-terminus: Periplasmic trehalase (565 aa).

Positions 1–30 (MKSPAPSRPQKMALIPACIFLCFAALSVQA) are cleaved as a signal peptide. Residues Arg152, 159–160 (WD), Asn196, 205–207 (RSQ), 277–279 (RPE), and Gly310 each bind substrate. Catalysis depends on proton donor/acceptor residues Asp312 and Glu496. Residue Glu511 participates in substrate binding. The interval 539–565 (CDNVPATRPLSESTTQPLKQKEAEPTP) is disordered.

It belongs to the glycosyl hydrolase 37 family. As to quaternary structure, monomer.

Its subcellular location is the periplasm. It carries out the reaction alpha,alpha-trehalose + H2O = alpha-D-glucose + beta-D-glucose. Functionally, provides the cells with the ability to utilize trehalose at high osmolarity by splitting it into glucose molecules that can subsequently be taken up by the phosphotransferase-mediated uptake system. This chain is Periplasmic trehalase, found in Escherichia coli O1:K1 / APEC.